The sequence spans 192 residues: Ion-translocating oxidoreductase complex subunit B (192 aa).

The hydrophobic stretch occupies residues methionine 1–serine 26. Positions glutamate 32–valine 91 constitute a 4Fe-4S domain. Residues cysteine 49, cysteine 52, cysteine 57, cysteine 74, cysteine 117, cysteine 120, cysteine 123, cysteine 127, cysteine 147, cysteine 150, cysteine 153, and cysteine 157 each contribute to the [4Fe-4S] cluster site. 4Fe-4S ferredoxin-type domains lie at valine 108 to arginine 137 and alanine 138 to valine 167.

Belongs to the 4Fe4S bacterial-type ferredoxin family. RnfB subfamily. In terms of assembly, the complex is composed of six subunits: RsxA, RsxB, RsxC, RsxD, RsxE and RsxG. [4Fe-4S] cluster serves as cofactor.

The protein localises to the cell inner membrane. Its function is as follows. Part of a membrane-bound complex that couples electron transfer with translocation of ions across the membrane. Required to maintain the reduced state of SoxR. The sequence is that of Ion-translocating oxidoreductase complex subunit B from Escherichia fergusonii (strain ATCC 35469 / DSM 13698 / CCUG 18766 / IAM 14443 / JCM 21226 / LMG 7866 / NBRC 102419 / NCTC 12128 / CDC 0568-73).